A 357-amino-acid polypeptide reads, in one-letter code: Peptide chain release factor 1 (357 aa).

Gln236 is subject to N5-methylglutamine.

This sequence belongs to the prokaryotic/mitochondrial release factor family. In terms of processing, methylated by PrmC. Methylation increases the termination efficiency of RF1.

It is found in the cytoplasm. Functionally, peptide chain release factor 1 directs the termination of translation in response to the peptide chain termination codons UAG and UAA. The chain is Peptide chain release factor 1 from Mycobacterium ulcerans (strain Agy99).